Here is a 90-residue protein sequence, read N- to C-terminus: Small ribosomal subunit protein uS15 (90 aa).

The protein belongs to the universal ribosomal protein uS15 family. In terms of assembly, part of the 30S ribosomal subunit. Forms a bridge to the 50S subunit in the 70S ribosome, contacting the 23S rRNA.

Its function is as follows. One of the primary rRNA binding proteins, it binds directly to 16S rRNA where it helps nucleate assembly of the platform of the 30S subunit by binding and bridging several RNA helices of the 16S rRNA. Forms an intersubunit bridge (bridge B4) with the 23S rRNA of the 50S subunit in the ribosome. The protein is Small ribosomal subunit protein uS15 of Campylobacter curvus (strain 525.92).